A 432-amino-acid polypeptide reads, in one-letter code: MKLSNIPQRYVIVFLTFLSTCVCYIERVGFSIAYTVAADAAGINQSSKGTILSTFFVGYACSQVPGGWAAQKIGGRKVLLLSFVLWSSTCFLVPLDPNRVGLLVVARLLVGVAQGFIFPSIHTVLAQWVPPHERSRLVSITTSGMYLGAALGMWLLPALVELRGPESVFLAEALAGVIWSLLWIRYATDPPRSEHPKAAAAGFGGALLPTNVNHHKVTHIPWKKIMLSLPVWAIVVNNFTFHYALYVLMNWLPTYFELGLQISLQGMDSSKMVPYLNMFVFSIVGGFIADYLITKRILSVTRTRKFLNTVGFLIASAALMVLPMFRTENGVILCSSVALGFLALGRAGFAVNHMDIAPRYAGIVMGVSNTAGTLAGIIGVDLTGKLLEASKLVYSDLSHPESWRVVFFIPGLLCIFSSVVFLLFSTGERIFD.

Residues 1–23 (MKLSNIPQRYVIVFLTFLSTCVC) form the signal peptide. A run of 11 helical transmembrane segments spans residues 50–70 (TILS…GWAA), 78–98 (VLLL…LDPN), 101–121 (GLLV…FPSI), 140–160 (ITTS…PALV), 164–184 (GPES…LLWI), 229–249 (LPVW…YVLM), 273–293 (VPYL…DYLI), 305–325 (KFLN…LPMF), 331–351 (VILC…GFAV), 360–380 (YAGI…IIGV), and 405–425 (VVFF…LLFS).

Belongs to the major facilitator superfamily. Sodium/anion cotransporter (TC 2.A.1.14) family. Ubiquitous.

The protein localises to the golgi apparatus membrane. Inorganic phosphate and probable anion transporter. In Arabidopsis thaliana (Mouse-ear cress), this protein is Probable anion transporter 5 (ANTR5).